The sequence spans 187 residues: Flavin prenyltransferase UbiX (187 aa).

Residues 9-11, S34, and R123 contribute to the FMN site; that span reads GAS. Dimethylallyl phosphate contacts are provided by Y153 and K169.

This sequence belongs to the UbiX/PAD1 family.

It carries out the reaction dimethylallyl phosphate + FMNH2 = prenylated FMNH2 + phosphate. In terms of biological role, flavin prenyltransferase that catalyzes the synthesis of the prenylated FMN cofactor (prenyl-FMN) for 4-hydroxy-3-polyprenylbenzoic acid decarboxylase UbiD. The prenyltransferase is metal-independent and links a dimethylallyl moiety from dimethylallyl monophosphate (DMAP) to the flavin N5 and C6 atoms of FMN. The chain is Flavin prenyltransferase UbiX from Helicobacter pylori (strain J99 / ATCC 700824) (Campylobacter pylori J99).